The chain runs to 158 residues: Photosystem I assembly protein Ycf3 (158 aa).

3 TPR repeats span residues 35-68, 72-105, and 113-146; these read AFSYYREGMAAQAEGEYAQALESYYHALEFEEDV, SYIIYNIGLIYASNGEDEQALEYYHQALELNPRL, and AVIYHKQGMTYQDEQLLQKAAAYWRKAIQLAPGQ.

It belongs to the Ycf3 family.

The protein resides in the plastid. Its subcellular location is the chloroplast thylakoid membrane. Its function is as follows. Essential for the assembly of the photosystem I (PSI) complex. May act as a chaperone-like factor to guide the assembly of the PSI subunits. The polypeptide is Photosystem I assembly protein Ycf3 (Cyanidioschyzon merolae (strain NIES-3377 / 10D) (Unicellular red alga)).